Here is a 156-residue protein sequence, read N- to C-terminus: Transcriptional repressor NrdR (156 aa).

A zinc finger spans residues 3-34 (CPYCGETEDKVIDSRQGKEADVIRRRRECLSC). The ATP-cone domain maps to 49 to 139 (LVIIKKDGRR…VYREFKHVND (91 aa)).

Belongs to the NrdR family. Zn(2+) serves as cofactor.

Its function is as follows. Negatively regulates transcription of bacterial ribonucleotide reductase nrd genes and operons by binding to NrdR-boxes. This is Transcriptional repressor NrdR from Desulfatibacillum aliphaticivorans.